Reading from the N-terminus, the 311-residue chain is tRNA-cytidine(32) 2-sulfurtransferase (311 aa).

A PP-loop motif motif is present at residues 47–52 (SGGKDS). [4Fe-4S] cluster contacts are provided by C122, C125, and C213.

Belongs to the TtcA family. Homodimer. Requires Mg(2+) as cofactor. The cofactor is [4Fe-4S] cluster.

Its subcellular location is the cytoplasm. It carries out the reaction cytidine(32) in tRNA + S-sulfanyl-L-cysteinyl-[cysteine desulfurase] + AH2 + ATP = 2-thiocytidine(32) in tRNA + L-cysteinyl-[cysteine desulfurase] + A + AMP + diphosphate + H(+). The protein operates within tRNA modification. Catalyzes the ATP-dependent 2-thiolation of cytidine in position 32 of tRNA, to form 2-thiocytidine (s(2)C32). The sulfur atoms are provided by the cysteine/cysteine desulfurase (IscS) system. The sequence is that of tRNA-cytidine(32) 2-sulfurtransferase from Salmonella choleraesuis (strain SC-B67).